The sequence spans 115 residues: U3-lycotoxin-Ls1b (115 aa).

A signal peptide spans 1 to 20; that stretch reads MKFVLLFGVLLVTLFSYSSA. A propeptide spanning residues 21–44 is cleaved from the precursor; sequence EMLDDFDQADEDELLSLIEKEEAR. 4 disulfides stabilise this stretch: C48–C63, C55–C72, C62–C87, and C74–C85.

Belongs to the neurotoxin 19 (CSTX) family. 01 subfamily. Expressed by the venom gland.

The protein localises to the secreted. The protein is U3-lycotoxin-Ls1b of Lycosa singoriensis (Wolf spider).